The following is a 194-amino-acid chain: Large ribosomal subunit protein bL9 (194 aa).

Positions 169–194 (DDINDNARPENFFDPNAEFDGGEDNA) are disordered.

Belongs to the bacterial ribosomal protein bL9 family.

Binds to the 23S rRNA. The chain is Large ribosomal subunit protein bL9 from Mesorhizobium japonicum (strain LMG 29417 / CECT 9101 / MAFF 303099) (Mesorhizobium loti (strain MAFF 303099)).